A 482-amino-acid chain; its full sequence is tRNA sulfurtransferase (482 aa).

One can recognise a THUMP domain in the interval Q61–H165. ATP is bound by residues L183–I184, K265, G287, and Q296. Cysteines 344 and 456 form a disulfide. The region spanning I404–P482 is the Rhodanese domain. C456 serves as the catalytic Cysteine persulfide intermediate.

The protein belongs to the ThiI family.

It is found in the cytoplasm. It catalyses the reaction [ThiI sulfur-carrier protein]-S-sulfanyl-L-cysteine + a uridine in tRNA + 2 reduced [2Fe-2S]-[ferredoxin] + ATP + H(+) = [ThiI sulfur-carrier protein]-L-cysteine + a 4-thiouridine in tRNA + 2 oxidized [2Fe-2S]-[ferredoxin] + AMP + diphosphate. The catalysed reaction is [ThiS sulfur-carrier protein]-C-terminal Gly-Gly-AMP + S-sulfanyl-L-cysteinyl-[cysteine desulfurase] + AH2 = [ThiS sulfur-carrier protein]-C-terminal-Gly-aminoethanethioate + L-cysteinyl-[cysteine desulfurase] + A + AMP + 2 H(+). The protein operates within cofactor biosynthesis; thiamine diphosphate biosynthesis. Functionally, catalyzes the ATP-dependent transfer of a sulfur to tRNA to produce 4-thiouridine in position 8 of tRNAs, which functions as a near-UV photosensor. Also catalyzes the transfer of sulfur to the sulfur carrier protein ThiS, forming ThiS-thiocarboxylate. This is a step in the synthesis of thiazole, in the thiamine biosynthesis pathway. The sulfur is donated as persulfide by IscS. This Vibrio vulnificus (strain CMCP6) protein is tRNA sulfurtransferase.